A 130-amino-acid polypeptide reads, in one-letter code: MPITQNYGTGRRKSSKARIFLRKGSGNITVNGRPLDEFFGRETARMIVRQPLELTKNVANFDILITATGGGTTGQAGAIRLGIARALVEYDASLKPELRKAGFMTRDAREVERKKVGLHKARRATQFSKR.

This sequence belongs to the universal ribosomal protein uS9 family.

The chain is Small ribosomal subunit protein uS9 from Xylella fastidiosa (strain 9a5c).